The primary structure comprises 615 residues: Chaperone protein DnaK (615 aa).

Residue Thr195 is modified to Phosphothreonine; by autocatalysis. Residues 592–615 (EKGAQAASGKGPDDVIDADYKPAD) are disordered.

This sequence belongs to the heat shock protein 70 family.

Its function is as follows. Acts as a chaperone. This is Chaperone protein DnaK from Thermus thermophilus (strain ATCC BAA-163 / DSM 7039 / HB27).